Consider the following 333-residue polypeptide: D-fructose 1,6-bisphosphatase class 2/sedoheptulose 1,7-bisphosphatase (333 aa).

Asp-33, Glu-57, Asp-85, and Glu-88 together coordinate Mn(2+). Residues Glu-88 to Thr-90, Tyr-119, Arg-164 to Arg-166, and Asp-186 to Asp-188 contribute to the substrate site. Glu-213 lines the Mn(2+) pocket.

It belongs to the FBPase class 2 family. As to quaternary structure, homotetramer. Requires Mn(2+) as cofactor.

It catalyses the reaction beta-D-fructose 1,6-bisphosphate + H2O = beta-D-fructose 6-phosphate + phosphate. The catalysed reaction is D-sedoheptulose 1,7-bisphosphate + H2O = D-sedoheptulose 7-phosphate + phosphate. It participates in carbohydrate biosynthesis; Calvin cycle. Functionally, catalyzes the hydrolysis of fructose 1,6-bisphosphate (Fru 1,6-P2) and sedoheptulose 1,7-bisphosphate (Sed 1,7-P2) to fructose 6-phosphate and sedoheptulose 7-phosphate, respectively. This chain is D-fructose 1,6-bisphosphatase class 2/sedoheptulose 1,7-bisphosphatase, found in Prochlorococcus marinus (strain MIT 9301).